The following is a 94-amino-acid chain: Ribonuclease VapC3 (94 aa).

Position 6 (D6) interacts with Mg(2+).

Belongs to the PINc/VapC protein family. Mg(2+) is required as a cofactor.

Its function is as follows. Toxic component of a type II toxin-antitoxin (TA) system. An RNase. Its cognate antitoxin is VapB3. The protein is Ribonuclease VapC3 (vapC3) of Methanocaldococcus jannaschii (strain ATCC 43067 / DSM 2661 / JAL-1 / JCM 10045 / NBRC 100440) (Methanococcus jannaschii).